Consider the following 378-residue polypeptide: D-alanine--D-alanine ligase (378 aa).

The region spanning 141–347 (KKLLTLNGIR…YSELIDQLIQ (207 aa)) is the ATP-grasp domain. Residue 171 to 226 (AEELGETLFVKPARQGSSVGIHKVRNEEEYNAALEDGFKYDYKILVEEAIKNPREV) coordinates ATP. Mg(2+) is bound by residues D301, E314, and N316.

Belongs to the D-alanine--D-alanine ligase family. The cofactor is Mg(2+). Requires Mn(2+) as cofactor.

Its subcellular location is the cytoplasm. The catalysed reaction is 2 D-alanine + ATP = D-alanyl-D-alanine + ADP + phosphate + H(+). It functions in the pathway cell wall biogenesis; peptidoglycan biosynthesis. Functionally, cell wall formation. The chain is D-alanine--D-alanine ligase from Ligilactobacillus salivarius (strain UCC118) (Lactobacillus salivarius).